The sequence spans 110 residues: MTQAKQSIPALYDFIKERQANPVAGSYTDYLFTKGLDKILKKVGEESTEVIVAAKNPDDPAFILEVADLTYHVLVLMVERGITVDQIATELASREGKKSRLQERSKIEKY.

Belongs to the PRA-PH family.

Its subcellular location is the cytoplasm. The enzyme catalyses 1-(5-phospho-beta-D-ribosyl)-ATP + H2O = 1-(5-phospho-beta-D-ribosyl)-5'-AMP + diphosphate + H(+). It participates in amino-acid biosynthesis; L-histidine biosynthesis; L-histidine from 5-phospho-alpha-D-ribose 1-diphosphate: step 2/9. The protein is Phosphoribosyl-ATP pyrophosphatase of Lacticaseibacillus casei (strain BL23) (Lactobacillus casei).